Here is a 215-residue protein sequence, read N- to C-terminus: Pyrrolidone-carboxylate peptidase (215 aa).

Residues Glu80, Cys143, and His167 contribute to the active site.

It belongs to the peptidase C15 family. In terms of assembly, homotetramer.

The protein resides in the cytoplasm. The catalysed reaction is Release of an N-terminal pyroglutamyl group from a polypeptide, the second amino acid generally not being Pro.. Removes 5-oxoproline from various penultimate amino acid residues except L-proline. In Bacillus cereus (strain Q1), this protein is Pyrrolidone-carboxylate peptidase.